We begin with the raw amino-acid sequence, 393 residues long: Ig heavy chain C region (393 aa).

Ig-like domains follow at residues 63 to 157 (PTVI…RNIT), 168 to 260 (PVIK…ASIH), and 270 to 370 (PSVS…RTVN). N-linked (GlcNAc...) asparagine glycans are attached at residues asparagine 119, asparagine 155, asparagine 200, asparagine 230, asparagine 329, asparagine 366, asparagine 370, and asparagine 380.

In Heterodontus francisci (Horn shark), this protein is Ig heavy chain C region.